Reading from the N-terminus, the 430-residue chain is Lipoyl synthase, mitochondrial (430 aa).

The transit peptide at methionine 1–tyrosine 37 directs the protein to the mitochondrion. A compositionally biased stretch (low complexity) spans threonine 40–threonine 56. Positions threonine 40–phenylalanine 64 are disordered. [4Fe-4S] cluster is bound by residues cysteine 141, cysteine 146, cysteine 152, cysteine 172, cysteine 176, cysteine 179, and serine 387. The region spanning glycine 155–leucine 376 is the Radical SAM core domain.

The protein belongs to the radical SAM superfamily. Lipoyl synthase family. [4Fe-4S] cluster is required as a cofactor.

The protein localises to the mitochondrion. It carries out the reaction [[Fe-S] cluster scaffold protein carrying a second [4Fe-4S](2+) cluster] + N(6)-octanoyl-L-lysyl-[protein] + 2 oxidized [2Fe-2S]-[ferredoxin] + 2 S-adenosyl-L-methionine + 4 H(+) = [[Fe-S] cluster scaffold protein] + N(6)-[(R)-dihydrolipoyl]-L-lysyl-[protein] + 4 Fe(3+) + 2 hydrogen sulfide + 2 5'-deoxyadenosine + 2 L-methionine + 2 reduced [2Fe-2S]-[ferredoxin]. It participates in protein modification; protein lipoylation via endogenous pathway; protein N(6)-(lipoyl)lysine from octanoyl-[acyl-carrier-protein]: step 2/2. Its function is as follows. Catalyzes the radical-mediated insertion of two sulfur atoms into the C-6 and C-8 positions of the octanoyl moiety bound to the lipoyl domains of lipoate-dependent enzymes, thereby converting the octanoylated domains into lipoylated derivatives. The protein is Lipoyl synthase, mitochondrial of Blastomyces gilchristii (strain SLH14081) (Blastomyces dermatitidis).